A 440-amino-acid chain; its full sequence is Transposon Ty1-NL2 Gag polyprotein (440 aa).

Composition is skewed to polar residues over residues 1 to 23 (MESQQLSQHSPISHGSACASVTS), 48 to 60 (TKANSQQTTTPAS), 71 to 97 (SPQTAQSHSPQNGPYPQQCMMTQNQAN), and 129 to 152 (QFPQYPSSVGTPLSTPSPESGNTF). Disordered stretches follow at residues 1-97 (MESQ…NQAN), 129-171 (QFPQ…YVRP), and 352-440 (GSRN…PETY). Residues 153-165 (TDSSSADSDMTST) show a composition bias toward low complexity. Residues 299–401 (NNGIHINNKV…NSKSKTARAH (103 aa)) are RNA-binding. Residues 402-418 (NVSTSNNSPSTDNDSIS) show a composition bias toward low complexity. Residue S416 is modified to Phosphoserine. Positions 419–428 (KSTTEPIQLN) are enriched in polar residues. The span at 429–440 (NKHDLHLRPETY) shows a compositional bias: basic and acidic residues.

As to quaternary structure, homotrimer.

It is found in the cytoplasm. In terms of biological role, capsid protein (CA) is the structural component of the virus-like particle (VLP), forming the shell that encapsulates the retrotransposons dimeric RNA genome. The particles are assembled from trimer-clustered units and there are holes in the capsid shells that allow for the diffusion of macromolecules. CA also has nucleocapsid-like chaperone activity, promoting primer tRNA(i)-Met annealing to the multipartite primer-binding site (PBS), dimerization of Ty1 RNA and initiation of reverse transcription. The polypeptide is Transposon Ty1-NL2 Gag polyprotein (TY1A-NL2) (Saccharomyces cerevisiae (strain ATCC 204508 / S288c) (Baker's yeast)).